A 474-amino-acid chain; its full sequence is Dol-P-Glc:Glc(2)Man(9)GlcNAc(2)-PP-Dol alpha-1,2-glucosyltransferase (474 aa).

Residues 1–6 lie on the Cytoplasmic side of the membrane; the sequence is MAQLEG. Residues 7-27 form a helical membrane-spanning segment; that stretch reads YYFSAALSCTFLVSCLLFSAF. At 28–64 the chain is on the extracellular side; that stretch reads SRALREPYMDEIFHLPQAQRYCEGRFSLSQWDPMITT. Residues 65–85 traverse the membrane as a helical segment; sequence LPGLYLVSVGVVKPASWILGW. Residues 86-97 lie on the Cytoplasmic side of the membrane; that stretch reads SEHVVCSIGMLR. The helical transmembrane segment at 98-118 threads the bilayer; it reads FVNLLFSVGNFYLLYLLFRKI. The Extracellular portion of the chain corresponds to 119 to 126; that stretch reads QPRNKASS. A helical transmembrane segment spans residues 127–147; it reads SIQRILSTLTLAVFPTLYFFN. The Cytoplasmic portion of the chain corresponds to 148-150; that stretch reads FLY. The helical transmembrane segment at 151–171 threads the bilayer; sequence YTEAGSVFFTLFAYLMCLYGN. Residues 172–175 lie on the Extracellular side of the membrane; the sequence is HRTS. A helical transmembrane segment spans residues 176-196; sequence ALLGFCGFMFRQTNIIWAAFC. The Cytoplasmic portion of the chain corresponds to 197-256; that stretch reads AGHIIAQKCSEAWKTELQKKKEERLPPAKGPLSELRRVLQFLLMYSMSLKNLSMLFLLTW. A helical membrane pass occupies residues 257-277; it reads PYMLLLLAFFVFVVVNGGIVV. Over 278–283 the chain is Extracellular; that stretch reads GDRSSH. Residues 284 to 304 form a helical membrane-spanning segment; the sequence is EACLHFPQLFYFFSFTAFFSF. The Cytoplasmic portion of the chain corresponds to 305 to 317; the sequence is PHLLSPTKVKTFL. A helical transmembrane segment spans residues 318-338; it reads SLVWKRRVQFSVITLVSVFLV. Residues 339-365 lie on the Extracellular side of the membrane; that stretch reads WKFTYVHKYLLADNRHYTFYVWKRVFQ. The helical transmembrane segment at 366–386 threads the bilayer; the sequence is RHEIVKYLLVPAYMFAGWAVA. The Cytoplasmic portion of the chain corresponds to 387–392; it reads DSLKSK. Residues 393 to 413 form a helical membrane-spanning segment; the sequence is SIFWNLMFFVCLVASTVPQKL. At 414–436 the chain is on the extracellular side; it reads LEFRYFILPYIIYRLNMPLPPIS. A helical membrane pass occupies residues 437–457; the sequence is RLVCELGCYAVVNFLTFYIFL. At 458–473 the chain is on the cytoplasmic side; sequence NKTFQWSDSHDIQRFM.

It belongs to the ALG10 glucosyltransferase family. In terms of assembly, interacts with KCNH1; may regulate KCNH1, possibly by regulating its N-glycosylation. Interacts with KCNH2; may reduce KCNH2 sensitivity to classic proarrhythmic drug blockade, possibly by regulating its N-glycosylation. In terms of tissue distribution, highly expressed in brain, skeletal muscle, uterus, small intestine and liver. Moderately expressed in lung and kidney. Weakly expressed in heart and stomach.

It is found in the endoplasmic reticulum membrane. It catalyses the reaction an alpha-D-Glc-(1-&gt;3)-alpha-D-Glc-(1-&gt;3)-alpha-D-Man-(1-&gt;2)-alpha-D-Man-(1-&gt;2)-alpha-D-Man-(1-&gt;3)-[alpha-D-Man-(1-&gt;2)-alpha-D-Man-(1-&gt;3)-[alpha-D-Man-(1-&gt;2)-alpha-D-Man-(1-&gt;6)]-alpha-D-Man-(1-&gt;6)]-beta-D-Man-(1-&gt;4)-beta-D-GlcNAc-(1-&gt;4)-alpha-D-GlcNAc-diphospho-di-trans,poly-cis-dolichol + a di-trans,poly-cis-dolichyl beta-D-glucosyl phosphate = a alpha-D-Glc-(1-&gt;2)-alpha-D-Glc-(1-&gt;3)-alpha-D-Glc-(1-&gt;3)-alpha-D-Man-(1-&gt;2)-alpha-D-Man-(1-&gt;2)-alpha-D-Man-(1-&gt;3)-[alpha-D-Man-(1-&gt;2)-alpha-D-Man-(1-&gt;3)-[alpha-D-Man-(1-&gt;2)-alpha-D-Man-(1-&gt;6)]-alpha-D-Man-(1-&gt;6)]-beta-D-Man-(1-&gt;4)-beta-D-GlcNAc-(1-&gt;4)-alpha-D-GlcNAc-diphospho-di-trans,poly-cis-dolichol + a di-trans,poly-cis-dolichyl phosphate + H(+). The protein operates within protein modification; protein glycosylation. Its function is as follows. Dol-P-Glc:Glc(2)Man(9)GlcNAc(2)-PP-Dol alpha-1,2-glucosyltransferase that operates in the biosynthetic pathway of dolichol-linked oligosaccharides, the glycan precursors employed in protein asparagine (N)-glycosylation. The assembly of dolichol-linked oligosaccharides begins on the cytosolic side of the endoplasmic reticulum membrane and finishes in its lumen. The sequential addition of sugars to dolichol pyrophosphate produces dolichol-linked oligosaccharides containing fourteen sugars, including two GlcNAcs, nine mannoses and three glucoses. Once assembled, the oligosaccharide is transferred from the lipid to nascent proteins by oligosaccharyltransferases. In the lumen of the endoplasmic reticulum, adds the third and last glucose residue from dolichyl phosphate glucose (Dol-P-Glc) onto the lipid-linked oligosaccharide intermediate Glc(2)Man(9)GlcNAc(2)-PP-Dol to produce Glc(3)Man(9)GlcNAc(2)-PP-Dol. In Rattus norvegicus (Rat), this protein is Dol-P-Glc:Glc(2)Man(9)GlcNAc(2)-PP-Dol alpha-1,2-glucosyltransferase.